The following is a 451-amino-acid chain: tRNA-2-methylthio-N(6)-dimethylallyladenosine synthase (451 aa).

Positions 6–122 (RHYHITTFGC…LQDLLEQVFN (117 aa)) constitute an MTTase N-terminal domain. [4Fe-4S] cluster-binding residues include C15, C51, C85, C157, C161, and C164. A Radical SAM core domain is found at 143–380 (RDSKITAWVN…NHLVGVKAAD (238 aa)). The TRAM domain maps to 383–447 (QRYMGRIEEV…PFSLTGEVKE (65 aa)).

This sequence belongs to the methylthiotransferase family. MiaB subfamily. As to quaternary structure, monomer. [4Fe-4S] cluster serves as cofactor.

Its subcellular location is the cytoplasm. The catalysed reaction is N(6)-dimethylallyladenosine(37) in tRNA + (sulfur carrier)-SH + AH2 + 2 S-adenosyl-L-methionine = 2-methylsulfanyl-N(6)-dimethylallyladenosine(37) in tRNA + (sulfur carrier)-H + 5'-deoxyadenosine + L-methionine + A + S-adenosyl-L-homocysteine + 2 H(+). In terms of biological role, catalyzes the methylthiolation of N6-(dimethylallyl)adenosine (i(6)A), leading to the formation of 2-methylthio-N6-(dimethylallyl)adenosine (ms(2)i(6)A) at position 37 in tRNAs that read codons beginning with uridine. The sequence is that of tRNA-2-methylthio-N(6)-dimethylallyladenosine synthase from Trichodesmium erythraeum (strain IMS101).